The primary structure comprises 266 residues: Dihydropteroate synthase (266 aa).

The Pterin-binding domain occupies 12 to 260 (AAIMGILNVT…DVKANQDIVA (249 aa)). N19 lines the Mg(2+) pocket. Residues T59, D93, N112, D176, K212, and 248–250 (RVH) contribute to the (7,8-dihydropterin-6-yl)methyl diphosphate site.

This sequence belongs to the DHPS family. In terms of assembly, homodimer or homotrimer. Mg(2+) is required as a cofactor.

It carries out the reaction (7,8-dihydropterin-6-yl)methyl diphosphate + 4-aminobenzoate = 7,8-dihydropteroate + diphosphate. It functions in the pathway cofactor biosynthesis; tetrahydrofolate biosynthesis; 7,8-dihydrofolate from 2-amino-4-hydroxy-6-hydroxymethyl-7,8-dihydropteridine diphosphate and 4-aminobenzoate: step 1/2. In terms of biological role, catalyzes the condensation of para-aminobenzoate (pABA) with 6-hydroxymethyl-7,8-dihydropterin diphosphate (DHPt-PP) to form 7,8-dihydropteroate (H2Pte), the immediate precursor of folate derivatives. The sequence is that of Dihydropteroate synthase (folP) from Streptococcus pyogenes serotype M18 (strain MGAS8232).